Reading from the N-terminus, the 352-residue chain is Thymidine kinase (352 aa).

32-39 (GVYGIGKS) is an ATP binding site. The active-site Proton acceptor is the glutamate 60. Positions 78, 102, 105, and 148 each coordinate substrate. ATP is bound at residue arginine 192. Arginine 198 is a substrate binding site.

This sequence belongs to the herpesviridae thymidine kinase family. In terms of assembly, homodimer.

The enzyme catalyses thymidine + ATP = dTMP + ADP + H(+). Catalyzes the transfer of the gamma-phospho group of ATP to thymidine to generate dTMP in the salvage pathway of pyrimidine synthesis. The dTMP serves as a substrate for DNA polymerase during viral DNA replication. Allows the virus to be reactivated and to grow in non-proliferative cells lacking a high concentration of phosphorylated nucleic acid precursors. This Equine herpesvirus 4 (strain 1942) (EHV-4) protein is Thymidine kinase.